The primary structure comprises 117 residues: MNFVLSLIFLALILKGVQCEVHLVESGGGLVKPGGSLKLSCVVSGFTFNKYAMSWVRQTPEKRLEWVATISSGGLYTYYPDSVKGRFTISRDNAGNTLYLQMSSLRSEDTAMYYCAR.

Residues M1 to C19 form the signal peptide. The framework-1 stretch occupies residues E20 to N49. The cysteines at positions 41 and 115 are disulfide-linked. The segment at K50–S54 is complementarity-determining-1. Residues W55–A68 form a framework-2 region. The interval T69–G85 is complementarity-determining-2. A framework-3 region spans residues R86–R117.

This is Ig heavy chain V region 5-76 from Mus musculus (Mouse).